Here is a 139-residue protein sequence, read N- to C-terminus: GPI-anchored protein 53 (139 aa).

Positions 1–17 (MKFQLLTLVSIATTTLA) are cleaved as a signal peptide. 2 stretches are compositionally biased toward low complexity: residues 57–69 (TITSSSSTTTTTT) and 77–101 (TSTTSASSTTTTSTKSNSTSPSSSS). The disordered stretch occupies residues 57–115 (TITSSSSTTTTTTAKKDKKTTSTTSASSTTTTSTKSNSTSPSSSSSKKHKSETASITKT). Asn93 carries an N-linked (GlcNAc...) asparagine glycan. Gly116 is lipidated: GPI-anchor amidated glycine. A propeptide spans 117–139 (GADSVAAAAAVGGPILAALALLL) (removed in mature form).

The protein resides in the cell membrane. The sequence is that of GPI-anchored protein 53 (PGA53) from Candida albicans (strain SC5314 / ATCC MYA-2876) (Yeast).